The chain runs to 471 residues: Putative multidrug resistance protein MdtD (471 aa).

Residues 1–11 (MTDLPDSTRWQ) lie on the Periplasmic side of the membrane. Residues 12–32 (LWIVAFGFFMQSLDTTIVNTA) form a helical membrane-spanning segment. The Cytoplasmic segment spans residues 33–48 (LPSMAQSLGESPLHMH). Residues 49-69 (MVIVSYVLTVAVMLPASGWLA) form a helical membrane-spanning segment. The Periplasmic portion of the chain corresponds to 70–76 (DKVGVRN). Residues 77-97 (IFFTAIVLFTLGSLFCALSGT) form a helical membrane-spanning segment. The Cytoplasmic segment spans residues 98-101 (LNEL). The helical transmembrane segment at 102–124 (LLARALQGVGGAMMVPVGRLTVM) threads the bilayer. The Periplasmic portion of the chain corresponds to 125–137 (KIVPREQYMAAMT). The chain crosses the membrane as a helical span at residues 138 to 158 (FVTLPGQVGPLLGPALGGLLV). The Cytoplasmic segment spans residues 159–164 (EYASWH). Residues 165–185 (WIFLINIPVGIIGAIATLMLM) traverse the membrane as a helical segment. Residues 186–196 (PNYTMQTRRFD) lie on the Periplasmic side of the membrane. A helical membrane pass occupies residues 197–217 (LSGFLLLAVGMAVLTLALDGS). At 218–224 (KGTGLSP) the chain is on the cytoplasmic side. Residues 225–245 (LTIDGLVAVGVVALVLYLLHA) traverse the membrane as a helical segment. Topologically, residues 246–262 (RNNNRALFSLKLFRTRT) are periplasmic. The helical transmembrane segment at 263–283 (FSLGLAGSFAGRIGSGMLPFM) threads the bilayer. At 284 to 285 (TP) the chain is on the cytoplasmic side. The chain crosses the membrane as a helical span at residues 286 to 306 (VFLQIGLGFSPFHAGLMMIPM). Residues 307 to 341 (VLGSMGMKRIVVQVVNRFGYRRVLVATTLGLSLVT) are Periplasmic-facing. A helical membrane pass occupies residues 342–362 (LLFMTTALLGWYYVLPFVLFL). The Cytoplasmic segment spans residues 363–395 (QGMVNSTRFSSMNTLTLKDLPDNLASSGNSLLS). A helical transmembrane segment spans residues 396–416 (MIMQLSMSIGVTIAGLLLGLF). Residues 417–430 (GSQHVSIDSGTTQT) lie on the Periplasmic side of the membrane. The helical transmembrane segment at 431–451 (VFMYTWLSMALIIALPAFIFA) threads the bilayer. Residues 452–471 (RVPNDTHQNVAISRRKRSAQ) are Cytoplasmic-facing.

This sequence belongs to the major facilitator superfamily. TCR/Tet family.

The protein localises to the cell inner membrane. The protein is Putative multidrug resistance protein MdtD of Escherichia coli (strain SE11).